Here is a 151-residue protein sequence, read N- to C-terminus: Ribosomal RNA large subunit methyltransferase H (151 aa).

Residues Leu73, Gly100, and 119-124 (LSKMTL) contribute to the S-adenosyl-L-methionine site.

Belongs to the RNA methyltransferase RlmH family. In terms of assembly, homodimer.

The protein resides in the cytoplasm. It catalyses the reaction pseudouridine(1915) in 23S rRNA + S-adenosyl-L-methionine = N(3)-methylpseudouridine(1915) in 23S rRNA + S-adenosyl-L-homocysteine + H(+). In terms of biological role, specifically methylates the pseudouridine at position 1915 (m3Psi1915) in 23S rRNA. This is Ribosomal RNA large subunit methyltransferase H from Campylobacter lari (strain RM2100 / D67 / ATCC BAA-1060).